Here is a 478-residue protein sequence, read N- to C-terminus: MSSSTPTTPSIERTASTIWGGRFDSGPSAVMEAINASIGFDKRLYRQDIAGSKAHCTMLVATGILSKADGEAILGGLDRILAEIEAGDFPFSVALEDIHMNIESRLKDLIGEAAGRLHTARSRNDQVATDFRLWVRDAIDGVEGALARLQDVLITRAEEHADTVMPGFTHLQAAQPVTFGHHLLAYVEMIGRDRGRFHDARVRLNESPLGSAALAGTSFPIDRAMTAQILGFDRPCANSLDGVSDRDFALEFLAAASIASIHLSRLAEELVIWTSAQFGFVRLPDAYSTGSSIMPQKRNPDAAELVRAKAGRVIGDLASLLIVMKGLPLAYSKDMQDDKEPVFEAADTLELCIAAMTGMMETITPKVDRLRTAAGQGFTTATDLADWLVRALGTPFRHAHEVSGALVKMAEKKGVGLEDLSLAEMRTIEPRLTDEAIKVLSVDWSVRSRTSFGGTAPDNVRAACAAARARYAAKAPPR.

This sequence belongs to the lyase 1 family. Argininosuccinate lyase subfamily.

It is found in the cytoplasm. The enzyme catalyses 2-(N(omega)-L-arginino)succinate = fumarate + L-arginine. The protein operates within amino-acid biosynthesis; L-arginine biosynthesis; L-arginine from L-ornithine and carbamoyl phosphate: step 3/3. The sequence is that of Argininosuccinate lyase from Rhodospirillum rubrum (strain ATCC 11170 / ATH 1.1.1 / DSM 467 / LMG 4362 / NCIMB 8255 / S1).